A 285-amino-acid polypeptide reads, in one-letter code: Lectin (285 aa).

Residues 1 to 32 (MATSKLKTQNVVVSLSLTLTLVLVLLTSKANS) form the signal peptide. Asn107 is a glycosylation site (N-linked (GlcNAc...) asparagine).

This sequence belongs to the leguminous lectin family. As to quaternary structure, homotetramer.

Binds GalNAc and galactose. The protein is Lectin (LE1) of Glycine max (Soybean).